We begin with the raw amino-acid sequence, 391 residues long: Phosphoglycerate kinase (391 aa).

Substrate-binding positions include Asp21–Asn23, Arg36, His59–Arg62, Arg113, and Arg146. ATP-binding positions include Lys197, Glu319, and Gly345–Thr348.

This sequence belongs to the phosphoglycerate kinase family. Monomer.

Its subcellular location is the cytoplasm. The catalysed reaction is (2R)-3-phosphoglycerate + ATP = (2R)-3-phospho-glyceroyl phosphate + ADP. It participates in carbohydrate degradation; glycolysis; pyruvate from D-glyceraldehyde 3-phosphate: step 2/5. This chain is Phosphoglycerate kinase, found in Chromobacterium violaceum (strain ATCC 12472 / DSM 30191 / JCM 1249 / CCUG 213 / NBRC 12614 / NCIMB 9131 / NCTC 9757 / MK).